The sequence spans 383 residues: Activator of 90 kDa heat shock protein ATPase homolog (383 aa).

2 disordered regions span residues 97–126 (KKVL…KPAE) and 209–228 (EQSQ…TTTN).

It belongs to the AHA1 family. As to quaternary structure, interacts with hspD/HSP90.

Its subcellular location is the cytoplasm. Co-chaperone that stimulates hspD/HSP90 ATPase activity. The polypeptide is Activator of 90 kDa heat shock protein ATPase homolog (ahsa) (Dictyostelium discoideum (Social amoeba)).